The primary structure comprises 76 residues: Translation initiation factor IF-1 (76 aa).

An S1-like domain is found at 1 to 76 (MEDMAKKDGV…TRGRIVYRYK (76 aa)).

The protein belongs to the IF-1 family. In terms of assembly, component of the 30S ribosomal translation pre-initiation complex which assembles on the 30S ribosome in the order IF-2 and IF-3, IF-1 and N-formylmethionyl-tRNA(fMet); mRNA recruitment can occur at any time during PIC assembly.

Its subcellular location is the cytoplasm. In terms of biological role, one of the essential components for the initiation of protein synthesis. Stabilizes the binding of IF-2 and IF-3 on the 30S subunit to which N-formylmethionyl-tRNA(fMet) subsequently binds. Helps modulate mRNA selection, yielding the 30S pre-initiation complex (PIC). Upon addition of the 50S ribosomal subunit IF-1, IF-2 and IF-3 are released leaving the mature 70S translation initiation complex. In Renibacterium salmoninarum (strain ATCC 33209 / DSM 20767 / JCM 11484 / NBRC 15589 / NCIMB 2235), this protein is Translation initiation factor IF-1.